Reading from the N-terminus, the 256-residue chain is Trans-aconitate 2-methyltransferase (256 aa).

This sequence belongs to the methyltransferase superfamily. Tam family.

The protein localises to the cytoplasm. It carries out the reaction trans-aconitate + S-adenosyl-L-methionine = (E)-3-(methoxycarbonyl)pent-2-enedioate + S-adenosyl-L-homocysteine. Its function is as follows. Catalyzes the S-adenosylmethionine monomethyl esterification of trans-aconitate. This is Trans-aconitate 2-methyltransferase from Rhizobium leguminosarum bv. trifolii (strain WSM2304).